The chain runs to 1021 residues: Phytosulfokine receptor 1 (1021 aa).

The N-terminal stretch at 1–24 is a signal peptide; that stretch reads MGVLRVYVILILVGFCVQIVVVNS. One copy of the LRR 1 repeat lies at 21 to 43; it reads VVNSQNLTCNSNDLKALEGFMRG. Residues Asn26, Asn54, and Asn83 are each glycosylated (N-linked (GlcNAc...) asparagine). LRR repeat units lie at residues 85-109, 110-133, 135-156, 158-180, 181-205, 206-229, 231-252, 253-277, 301-325, 326-349, 351-372, 373-397, 402-426, 428-448, 449-474, and 476-496; these read SGRVVELELGRRKLSGKLSESVAKL, DQLKVLNLTHNSLSGSIAASLLNL, NLEVLDLSSNDFSGLFPSLINL, SLRVLNVYENSFHGLIPASLCNN, LPRIREIDLAMNYFDGSIPVGIGNC, SSVEYLGLASNNLSGSIPQELFQL, NLSVLALQNNRLSGALSSKLGK, LSNLGRLDISSNKFSGKIPDVFLEL, SRSISLLSLRNNTLSGQIYLNCSAM, TNLTSLDLASNSFSGSIPSNLPNC, RLKTINFAKIKFIAQIPESFKN, FQSLTSLSFSNSSIQNISSALEILQ, LKTLVLTLNFQKEELPSVPSLQFKN, KVLIIASCQLRGTVPQWLSNS, PSLQLLDLSWNQLSGTIPPWLGSLNS, and FYLDLSNNTFIGEIPHSLTSL. Residues Asn116 and Asn132 are each glycosylated (N-linked (GlcNAc...) asparagine). N-linked (GlcNAc...) asparagine glycans are attached at residues Asn204, Asn217, and Asn231. Asn311, Asn321, and Asn327 each carry an N-linked (GlcNAc...) asparagine glycan. 2 N-linked (GlcNAc...) asparagine glycosylation sites follow: Asn383 and Asn388. 5 N-linked (GlcNAc...) asparagine glycosylation sites follow: Asn482, Asn546, Asn568, Asn576, and Asn592. One copy of the LRR 18; atypical repeat lies at 498 to 555; sequence SLVSKENAVEEPSPDFPFFKKKNTNAGGLQYNQPSSFPPMIDLSYNSLNGSIWPEFGD. 3 LRR repeats span residues 556–580, 581–604, and 606–629; these read LRQLHVLNLKNNNLSGNIPANLSGM, TSLEVLDLSHNNLSGNIPPSLVKL, and FLSTFSVAYNKLSGPIPTGVQFQT. Asn632 is a glycosylation site (N-linked (GlcNAc...) asparagine). A helical transmembrane segment spans residues 673-693; the sequence is VAVGTGLGTVFLLTVTLLIIL. One can recognise a Protein kinase domain in the interval 743-1014; that stretch reads FNQANIIGCG…PTTQQLVSWL (272 aa). ATP is bound by residues 749-757 and Lys771; that span reads IGCGGFGLV. Asp869 (proton acceptor) is an active-site residue.

Belongs to the protein kinase superfamily. Ser/Thr protein kinase family. N-glycosylated. In terms of tissue distribution, expressed ubiquitously in leaf, apical meristem, hypocotyl and root.

The protein resides in the cell membrane. The enzyme catalyses L-seryl-[protein] + ATP = O-phospho-L-seryl-[protein] + ADP + H(+). The catalysed reaction is L-threonyl-[protein] + ATP = O-phospho-L-threonyl-[protein] + ADP + H(+). In terms of biological role, phytosulfokine receptor with a serine/threonine-protein kinase activity. Regulates, in response to phytosulfokine binding, a signaling cascade involved in plant cell differentiation, organogenesis and somatic embryogenesis. The sequence is that of Phytosulfokine receptor 1 (PSKR) from Daucus carota (Wild carrot).